We begin with the raw amino-acid sequence, 348 residues long: Dihydroorotase (348 aa).

Residues His-17 and His-19 each coordinate Zn(2+). Substrate is bound by residues 19–21 and Asn-45; that span reads HLR. Zn(2+)-binding residues include Lys-103, His-140, and His-178. Lys-103 is modified (N6-carboxylysine). Substrate is bound at residue His-140. Position 223 (Leu-223) interacts with substrate. Asp-251 contributes to the Zn(2+) binding site. Residue Asp-251 is part of the active site. His-255 and Ala-267 together coordinate substrate.

The protein belongs to the metallo-dependent hydrolases superfamily. DHOase family. Class II DHOase subfamily. Homodimer. Zn(2+) is required as a cofactor.

The catalysed reaction is (S)-dihydroorotate + H2O = N-carbamoyl-L-aspartate + H(+). Its pathway is pyrimidine metabolism; UMP biosynthesis via de novo pathway; (S)-dihydroorotate from bicarbonate: step 3/3. Its function is as follows. Catalyzes the reversible cyclization of carbamoyl aspartate to dihydroorotate. The polypeptide is Dihydroorotase (Shigella boydii serotype 18 (strain CDC 3083-94 / BS512)).